A 332-amino-acid polypeptide reads, in one-letter code: Tetraacyldisaccharide 4'-kinase (332 aa).

An ATP-binding site is contributed by 60 to 67 (TVGGTGKT).

This sequence belongs to the LpxK family.

The catalysed reaction is a lipid A disaccharide + ATP = a lipid IVA + ADP + H(+). The protein operates within glycolipid biosynthesis; lipid IV(A) biosynthesis; lipid IV(A) from (3R)-3-hydroxytetradecanoyl-[acyl-carrier-protein] and UDP-N-acetyl-alpha-D-glucosamine: step 6/6. Its function is as follows. Transfers the gamma-phosphate of ATP to the 4'-position of a tetraacyldisaccharide 1-phosphate intermediate (termed DS-1-P) to form tetraacyldisaccharide 1,4'-bis-phosphate (lipid IVA). The sequence is that of Tetraacyldisaccharide 4'-kinase from Pseudomonas paraeruginosa (strain DSM 24068 / PA7) (Pseudomonas aeruginosa (strain PA7)).